A 312-amino-acid polypeptide reads, in one-letter code: Acetyl-coenzyme A carboxylase carboxyl transferase subunit alpha (312 aa).

One can recognise a CoA carboxyltransferase C-terminal domain in the interval 36–286 (NLEKEISKTY…ADYVKKSLNE (251 aa)).

The protein belongs to the AccA family. In terms of assembly, acetyl-CoA carboxylase is a heterohexamer composed of biotin carboxyl carrier protein (AccB), biotin carboxylase (AccC) and two subunits each of ACCase subunit alpha (AccA) and ACCase subunit beta (AccD).

It is found in the cytoplasm. The enzyme catalyses N(6)-carboxybiotinyl-L-lysyl-[protein] + acetyl-CoA = N(6)-biotinyl-L-lysyl-[protein] + malonyl-CoA. Its pathway is lipid metabolism; malonyl-CoA biosynthesis; malonyl-CoA from acetyl-CoA: step 1/1. Functionally, component of the acetyl coenzyme A carboxylase (ACC) complex. First, biotin carboxylase catalyzes the carboxylation of biotin on its carrier protein (BCCP) and then the CO(2) group is transferred by the carboxyltransferase to acetyl-CoA to form malonyl-CoA. The polypeptide is Acetyl-coenzyme A carboxylase carboxyl transferase subunit alpha (Campylobacter jejuni subsp. jejuni serotype O:6 (strain 81116 / NCTC 11828)).